A 331-amino-acid chain; its full sequence is Ketol-acid reductoisomerase (NADP(+)) (331 aa).

Residues 2–182 enclose the KARI N-terminal Rossmann domain; it reads ARMYYDEDGN…GGTRAGILET (181 aa). NADP(+)-binding positions include 25-28, Ser51, Ser53, and 83-86; these read YGSQ and DEVQ. His108 is a catalytic residue. Position 134 (Gly134) interacts with NADP(+). The 146-residue stretch at 183-328 folds into the KARI C-terminal knotted domain; sequence SFREETETDL…KDLRAMFSWL (146 aa). Asp191, Glu195, Glu227, and Glu231 together coordinate Mg(2+). Ser252 provides a ligand contact to substrate.

This sequence belongs to the ketol-acid reductoisomerase family. It depends on Mg(2+) as a cofactor.

It carries out the reaction (2R)-2,3-dihydroxy-3-methylbutanoate + NADP(+) = (2S)-2-acetolactate + NADPH + H(+). It catalyses the reaction (2R,3R)-2,3-dihydroxy-3-methylpentanoate + NADP(+) = (S)-2-ethyl-2-hydroxy-3-oxobutanoate + NADPH + H(+). It functions in the pathway amino-acid biosynthesis; L-isoleucine biosynthesis; L-isoleucine from 2-oxobutanoate: step 2/4. Its pathway is amino-acid biosynthesis; L-valine biosynthesis; L-valine from pyruvate: step 2/4. In terms of biological role, involved in the biosynthesis of branched-chain amino acids (BCAA). Catalyzes an alkyl-migration followed by a ketol-acid reduction of (S)-2-acetolactate (S2AL) to yield (R)-2,3-dihydroxy-isovalerate. In the isomerase reaction, S2AL is rearranged via a Mg-dependent methyl migration to produce 3-hydroxy-3-methyl-2-ketobutyrate (HMKB). In the reductase reaction, this 2-ketoacid undergoes a metal-dependent reduction by NADPH to yield (R)-2,3-dihydroxy-isovalerate. The protein is Ketol-acid reductoisomerase (NADP(+)) of Gloeothece citriformis (strain PCC 7424) (Cyanothece sp. (strain PCC 7424)).